A 192-amino-acid polypeptide reads, in one-letter code: Ubiquitin-conjugating enzyme E2 T (192 aa).

Residues 2–152 (QRVSRLKREL…AKKWTEKHAL (151 aa)) enclose the UBC core domain. Cysteine 86 (glycyl thioester intermediate) is an active-site residue. Residues 150-192 (HALPAPQGSDKESQEKSGSSEGTSHKRKSAEIAEESKKPCREP) are disordered. Over residues 178–192 (SAEIAEESKKPCREP) the composition is skewed to basic and acidic residues.

The protein belongs to the ubiquitin-conjugating enzyme family.

The protein localises to the nucleus. The catalysed reaction is S-ubiquitinyl-[E1 ubiquitin-activating enzyme]-L-cysteine + [E2 ubiquitin-conjugating enzyme]-L-cysteine = [E1 ubiquitin-activating enzyme]-L-cysteine + S-ubiquitinyl-[E2 ubiquitin-conjugating enzyme]-L-cysteine.. It participates in protein modification; protein ubiquitination. In terms of biological role, accepts ubiquitin from the E1 complex and catalyzes its covalent attachment to other proteins. Catalyzes monoubiquitination. Involved in DNA repair. This is Ubiquitin-conjugating enzyme E2 T (ube2t) from Xenopus laevis (African clawed frog).